Consider the following 57-residue polypeptide: Large ribosomal subunit protein bL32 (57 aa).

Basic residues predominate over residues 1 to 19 (MATPKRRMSRANTRSRRSQ). The segment at 1-20 (MATPKRRMSRANTRSRRSQW) is disordered.

It belongs to the bacterial ribosomal protein bL32 family.

The polypeptide is Large ribosomal subunit protein bL32 (Mycobacterium marinum (strain ATCC BAA-535 / M)).